We begin with the raw amino-acid sequence, 73 residues long: Crustacean hyperglycemic hormone (73 aa).

Intrachain disulfides connect Cys-7-Cys-43, Cys-23-Cys-39, and Cys-26-Cys-52. Serine amide is present on Ser-73.

In terms of tissue distribution, produced by the medulla terminalis X-organ in the eyestalks and transported to the sinus gland where they are stored and released. Found also in the brain; in the neuroendocrine structures of the protocerebrum.

The protein localises to the secreted. Functionally, hormone found in the sinus gland of isopods and decapods which controls the blood sugar level. Has a secretagogue action over the amylase released from the midgut gland. May act as a stress hormone and may be involved in the control of molting and reproduction. The protein is Crustacean hyperglycemic hormone of Armadillidium vulgare (Pillbug).